Reading from the N-terminus, the 305-residue chain is Glycine--tRNA ligase alpha subunit (305 aa).

It belongs to the class-II aminoacyl-tRNA synthetase family. Tetramer of two alpha and two beta subunits.

Its subcellular location is the cytoplasm. The catalysed reaction is tRNA(Gly) + glycine + ATP = glycyl-tRNA(Gly) + AMP + diphosphate. This chain is Glycine--tRNA ligase alpha subunit, found in Streptococcus mutans serotype c (strain ATCC 700610 / UA159).